The sequence spans 111 residues: MVFMDDLEEIRRRKLMELQRQKELEELQKEEMRRQVEAQKKAILRAILEPEAKERLSRLKLAHPEIAEAVENQLIYLAQAGRIQSKITDKMLVEILKRVQPKKRETRIIRK.

This sequence belongs to the PDCD5 family.

The protein is DNA-binding protein AF_2068 of Archaeoglobus fulgidus (strain ATCC 49558 / DSM 4304 / JCM 9628 / NBRC 100126 / VC-16).